A 172-amino-acid chain; its full sequence is Translationally-controlled tumor protein homolog (172 aa).

The TCTP domain occupies 1–172 (MIIYKDCITE…FKDGLIIEKC (172 aa)).

It belongs to the TCTP family.

It localises to the cytoplasm. In terms of biological role, involved in calcium binding and microtubule stabilization. The sequence is that of Translationally-controlled tumor protein homolog (tpt1) from Xenopus laevis (African clawed frog).